Consider the following 141-residue polypeptide: Small ribosomal subunit protein uS12 (141 aa).

Position 102 is a 3-methylthioaspartic acid (Asp-102). Residues 115–141 (GDASGVEKRRQQRSLYGAKRPKKEASK) form a disordered region.

The protein belongs to the universal ribosomal protein uS12 family. Part of the 30S ribosomal subunit. Contacts proteins S8 and S17. May interact with IF1 in the 30S initiation complex.

Functionally, with S4 and S5 plays an important role in translational accuracy. Its function is as follows. Interacts with and stabilizes bases of the 16S rRNA that are involved in tRNA selection in the A site and with the mRNA backbone. Located at the interface of the 30S and 50S subunits, it traverses the body of the 30S subunit contacting proteins on the other side and probably holding the rRNA structure together. The combined cluster of proteins S8, S12 and S17 appears to hold together the shoulder and platform of the 30S subunit. This Ureaplasma parvum serovar 3 (strain ATCC 27815 / 27 / NCTC 11736) protein is Small ribosomal subunit protein uS12.